The chain runs to 181 residues: Organelle RRM domain-containing protein 6, chloroplastic (181 aa).

The transit peptide at 1–44 (MAISLGRVVVPSCTISGDRLFIPNFSAICSVSCGRINVGTGVIS) directs the protein to the chloroplast. The 79-residue stretch at 77–155 (TKLYVSGLSF…RVIFVEEAKT (79 aa)) folds into the RRM domain. Residues 155–169 (TRSDMSRAKPRRDFP) show a composition bias toward basic and acidic residues. Positions 155-181 (TRSDMSRAKPRRDFPKPQSKPRTFRTW) are disordered.

As to quaternary structure, interacts with MORF8/RIP1, MORF2/RIP2, MORF9/RIP9 and VAR3/OZ1.

Its subcellular location is the plastid. It is found in the chloroplast. Functionally, involved in C-to-U editing of chloroplastic RNA. Required for the photosynthetic subunit psbF transcript editing in chloroplast. The chain is Organelle RRM domain-containing protein 6, chloroplastic from Arabidopsis thaliana (Mouse-ear cress).